Reading from the N-terminus, the 203-residue chain is CASP-like protein 5A2 (203 aa).

At 1–63 (MRASRPVVHP…KDPPGAPGTP (63 aa)) the chain is on the cytoplasmic side. Residues 39-58 (AAHGGENAQPRGVRMKDPPG) are disordered. Residues 64–84 (GGLGLRLVQAFFAAAALAVMA) form a helical membrane-spanning segment. At 85 to 94 (STDDFPSVSA) the chain is on the extracellular side. A helical transmembrane segment spans residues 95-115 (FCYLVAAAILQCLWSLSLAVV). Residues 116–139 (DIYALLVKRSLRNPQAVCIFTIGD) lie on the Cytoplasmic side of the membrane. Residues 140–160 (GITGTLTLGAACASAGITVLI) traverse the membrane as a helical segment. The Extracellular portion of the chain corresponds to 161–177 (GNDLNICANNHCASFET). A helical transmembrane segment spans residues 178–198 (ATAMAFISWFALAPSCVLNFW). The Cytoplasmic segment spans residues 199–203 (SMASR).

This sequence belongs to the Casparian strip membrane proteins (CASP) family. Homodimer and heterodimers.

It is found in the cell membrane. The protein is CASP-like protein 5A2 of Oryza sativa subsp. indica (Rice).